Here is a 348-residue protein sequence, read N- to C-terminus: [FeFe] hydrogenase maturase subunit HydE (348 aa).

Positions 49–268 (DEVHIRAIIE…LLPDSNIPAT (220 aa)) constitute a Radical SAM core domain. Residues Cys-63, Cys-67, and Cys-70 each contribute to the [4Fe-4S] cluster site. The [2Fe-2S] cluster site is built by Cys-311, Cys-319, and Cys-322.

Belongs to the radical SAM superfamily. HydE family. Monomer. The cofactor is [4Fe-4S] cluster. It depends on [2Fe-2S] cluster as a cofactor.

Its function is as follows. Required for the maturation of the [FeFe]-hydrogenase HydA. Catalyzes the reductive cleavage of S-adenosyl-L-methionine (in vitro), suggesting it may contribute to the biosynthesis of an essential sulfur-containing ligand that binds to the hydrogenase active site [2Fe-2S] cluster. The polypeptide is [FeFe] hydrogenase maturase subunit HydE (Thermotoga maritima (strain ATCC 43589 / DSM 3109 / JCM 10099 / NBRC 100826 / MSB8)).